Here is a 191-residue protein sequence, read N- to C-terminus: Flavin prenyltransferase UbiX (191 aa).

FMN contacts are provided by residues 13-15 (GAS), threonine 39, 90-93 (TMKT), and arginine 125. Dimethylallyl phosphate-binding residues include tyrosine 155 and lysine 171.

This sequence belongs to the UbiX/PAD1 family.

It carries out the reaction dimethylallyl phosphate + FMNH2 = prenylated FMNH2 + phosphate. Its function is as follows. Flavin prenyltransferase that catalyzes the synthesis of the prenylated FMN cofactor (prenyl-FMN) for 4-hydroxy-3-polyprenylbenzoic acid decarboxylase UbiD. The prenyltransferase is metal-independent and links a dimethylallyl moiety from dimethylallyl monophosphate (DMAP) to the flavin N5 and C6 atoms of FMN. In Methanothermobacter thermautotrophicus (strain ATCC 29096 / DSM 1053 / JCM 10044 / NBRC 100330 / Delta H) (Methanobacterium thermoautotrophicum), this protein is Flavin prenyltransferase UbiX.